Consider the following 87-residue polypeptide: Small polypeptide DEVIL 11 (87 aa).

Residues 1-11 are compositionally biased toward polar residues; the sequence is MASSSSLTRSG. The disordered stretch occupies residues 1–47; it reads MASSSSLTRSGSVHLDEKWKLSKKDGGASRITRSSSTSSSSFNGKKQ. Basic and acidic residues predominate over residues 14–27; it reads HLDEKWKLSKKDGG. Residues 29–41 show a composition bias toward low complexity; sequence SRITRSSSTSSSS. The required for DVL/RTFL small polypeptide activity stretch occupies residues 51–82; sequence AFTRKCARLVKEQRARFYIMRRCVIMLICWRD. Residues 64 to 80 form a helical membrane-spanning segment; the sequence is RARFYIMRRCVIMLICW. The N-linked (GlcNAc...) asparagine glycan is linked to asparagine 83.

It belongs to the DVL/RTFL small polypeptides family.

It is found in the cell membrane. Small polypeptide acting as a regulatory molecule which coordinates cellular responses required for differentiation, growth and development, probably by restricting polar cell proliferation in lateral organs and coordinating socket cell recruitment and differentiation at trichome sites. In Arabidopsis thaliana (Mouse-ear cress), this protein is Small polypeptide DEVIL 11.